Consider the following 284-residue polypeptide: MDAIKKKMQMLKLDKENALDRAEQAESDKKASEDRSKQLEDDLVALQKKLKGTEDELDKYSEALKDAQEKLELAEKKATDAEGDVASLNRRIQLVEEELDRAQERLATALTKLEEAEKAADESERGMKVIENRAMKDEEKMELQEIQLKEAKHIAEEADRKYEEVARKLVIIEGDLERTEERAELSESKCSELEEELKTVTNNLKSLEAQAEKYSQKEDKYEEEIKVLTDKLKEAETRAEFAERSVAKLEKTIDDLEDELYAQKLKYKAISEELDHALNDMTSI.

At Met1 the chain carries N-acetylmethionine. Residues 1–40 (MDAIKKKMQMLKLDKENALDRAEQAESDKKASEDRSKQLE) form a disordered region. The stretch at 1–284 (MDAIKKKMQM…DHALNDMTSI (284 aa)) forms a coiled coil. A compositionally biased stretch (basic and acidic residues) spans 12-40 (KLDKENALDRAEQAESDKKASEDRSKQLE).

In terms of assembly, homodimer. Heterodimer of an alpha (TPM1, TPM3 or TPM4) and a beta (TPM2) chain.

It localises to the cytoplasm. It is found in the cytoskeleton. In terms of biological role, binds to actin filaments in muscle and non-muscle cells. Plays a central role, in association with the troponin complex, in the calcium dependent regulation of vertebrate striated muscle contraction. Smooth muscle contraction is regulated by interaction with caldesmon. In non-muscle cells is implicated in stabilizing cytoskeleton actin filaments. This is Tropomyosin alpha-1 chain from Chelon auratus (Golden grey mullet).